Consider the following 401-residue polypeptide: S-adenosylmethionine synthase (401 aa).

Position 16 (His-16) interacts with ATP. A Mg(2+)-binding site is contributed by Asp-18. Glu-44 lines the K(+) pocket. L-methionine is bound by residues Glu-57 and Gln-109. Positions 109–119 (QSAHIAQGVDA) are flexible loop. ATP-binding positions include 174–176 (DAK), Asp-251, 257–258 (RK), Ala-274, and Lys-278. Asp-251 is a binding site for L-methionine. Lys-282 contacts L-methionine.

The protein belongs to the AdoMet synthase family. In terms of assembly, homotetramer; dimer of dimers. Requires Mg(2+) as cofactor. K(+) serves as cofactor.

It localises to the cytoplasm. The catalysed reaction is L-methionine + ATP + H2O = S-adenosyl-L-methionine + phosphate + diphosphate. Its pathway is amino-acid biosynthesis; S-adenosyl-L-methionine biosynthesis; S-adenosyl-L-methionine from L-methionine: step 1/1. In terms of biological role, catalyzes the formation of S-adenosylmethionine (AdoMet) from methionine and ATP. The overall synthetic reaction is composed of two sequential steps, AdoMet formation and the subsequent tripolyphosphate hydrolysis which occurs prior to release of AdoMet from the enzyme. In Novosphingobium aromaticivorans (strain ATCC 700278 / DSM 12444 / CCUG 56034 / CIP 105152 / NBRC 16084 / F199), this protein is S-adenosylmethionine synthase.